Consider the following 433-residue polypeptide: B3 domain-containing protein Os04g0676600 (433 aa).

Disordered regions lie at residues 1 to 29 (MADT…GGGQ) and 216 to 283 (FPPV…NSAN). Positions 13-24 (GDDRGREGHDDF) are enriched in basic and acidic residues. The span at 216 to 229 (FPPVSSSSRSFSSA) shows a compositional bias: low complexity. The segment covering 237–265 (DAKKAKKSDIKDQPIVLRRSDTESEKNDE) has biased composition (basic and acidic residues). A compositionally biased stretch (polar residues) spans 269–283 (TPASEPSSMSHNSAN). Residues 297–399 (LRKELTNSDV…KLVVRGEKAI (103 aa)) constitute a DNA-binding region (TF-B3).

It is found in the nucleus. Its function is as follows. Probable transcription regulator that binds specifically to the DNA sequence 5'-CATGC-3' of the IDE1 element found in the promoter of the barley iron deficiency-inducible gene IDS2. The polypeptide is B3 domain-containing protein Os04g0676600 (Oryza sativa subsp. japonica (Rice)).